The following is a 125-amino-acid chain: Probable 4-amino-4-deoxy-L-arabinose-phosphoundecaprenol flippase subunit ArnF (125 aa).

The Cytoplasmic segment spans residues 1–2 (MG). The helical transmembrane segment at 3–23 (VMWGLISVAIASLAQLSLGFA) threads the bilayer. The Periplasmic segment spans residues 24–33 (MMRLPSIAHP). Residues 34-54 (LAFISGLGAFNAATLALFAGL) traverse the membrane as a helical segment. At 55 to 76 (AGYLVSVFCWQKTLHMLALSKA) the chain is on the cytoplasmic side. A helical membrane pass occupies residues 77-97 (YALLSLSYVLVWVASMLLPGL). At 98–100 (QGA) the chain is on the periplasmic side. The helical transmembrane segment at 101–121 (FSLKAMLGVLCIMAGVMLIFL) threads the bilayer. Topologically, residues 122–125 (PARS) are cytoplasmic.

It belongs to the ArnF family. In terms of assembly, heterodimer of ArnE and ArnF.

It is found in the cell inner membrane. It functions in the pathway bacterial outer membrane biogenesis; lipopolysaccharide biosynthesis. Translocates 4-amino-4-deoxy-L-arabinose-phosphoundecaprenol (alpha-L-Ara4N-phosphoundecaprenol) from the cytoplasmic to the periplasmic side of the inner membrane. This chain is Probable 4-amino-4-deoxy-L-arabinose-phosphoundecaprenol flippase subunit ArnF, found in Salmonella paratyphi A (strain ATCC 9150 / SARB42).